A 366-amino-acid polypeptide reads, in one-letter code: MLKRIVQAFFIIFGGVVGIFLIPELFVLLNIQDIPLITNAYTSAAIGAIIFFLISIWGTEYVVNWVKWIEDSLLKAPVPDLLFGSLGLVFGLIIAYLIVNVIPLDNIPYRIFSTIIPVFLAFFLGYLGFQVGFKKKDELISLFSISARMQKKKGTADEEHEVQDKKLKILDTSVIIDGRIADICQTGFLEGVIVIPQFVLEELQHIADSSDVLKRNRGRRGLDILNRIQKELDIEVEIYEGDFEDIQEVDSKLVKLAKLTSGVVVTNDFNLNKVCELQKVAVLNINDLANAVKPVVLPGEEMNVQVIKDGKEHNQGVAYLDDGTMIVVEEGRNYIGKHIDVLVTSVLQTAAGRMIFAKPKLLEKAL.

The PINc domain maps to 169–280 (ILDTSVIIDG…LNKVCELQKV (112 aa)). Asp-250 is a binding site for Mg(2+). The region spanning 295-356 (VVLPGEEMNV…LQTAAGRMIF (62 aa)) is the TRAM domain.

The protein belongs to the ycf81 family. In the central section; belongs to the PINc/VapC protein family. It depends on Mg(2+) as a cofactor.

Its function is as follows. An RNase. This is an uncharacterized protein from Bacillus subtilis (strain 168).